The chain runs to 210 residues: Imidazole glycerol phosphate synthase subunit HisH (210 aa).

One can recognise a Glutamine amidotransferase type-1 domain in the interval 3-210; it reads TIAIIDYGMG…ILKNFALSKA (208 aa). Cys-81 serves as the catalytic Nucleophile. Catalysis depends on residues His-190 and Glu-192.

Heterodimer of HisH and HisF.

Its subcellular location is the cytoplasm. It carries out the reaction 5-[(5-phospho-1-deoxy-D-ribulos-1-ylimino)methylamino]-1-(5-phospho-beta-D-ribosyl)imidazole-4-carboxamide + L-glutamine = D-erythro-1-(imidazol-4-yl)glycerol 3-phosphate + 5-amino-1-(5-phospho-beta-D-ribosyl)imidazole-4-carboxamide + L-glutamate + H(+). The enzyme catalyses L-glutamine + H2O = L-glutamate + NH4(+). It participates in amino-acid biosynthesis; L-histidine biosynthesis; L-histidine from 5-phospho-alpha-D-ribose 1-diphosphate: step 5/9. Functionally, IGPS catalyzes the conversion of PRFAR and glutamine to IGP, AICAR and glutamate. The HisH subunit catalyzes the hydrolysis of glutamine to glutamate and ammonia as part of the synthesis of IGP and AICAR. The resulting ammonia molecule is channeled to the active site of HisF. In Geobacter metallireducens (strain ATCC 53774 / DSM 7210 / GS-15), this protein is Imidazole glycerol phosphate synthase subunit HisH.